The sequence spans 231 residues: Ribonuclease HII (231 aa).

The 190-residue stretch at 33–222 (WPVAGADEAG…FREAQEQPLA (190 aa)) folds into the RNase H type-2 domain. A divalent metal cation contacts are provided by D39, E40, and D130.

This sequence belongs to the RNase HII family. It depends on Mn(2+) as a cofactor. Mg(2+) is required as a cofactor.

Its subcellular location is the cytoplasm. The enzyme catalyses Endonucleolytic cleavage to 5'-phosphomonoester.. Functionally, endonuclease that specifically degrades the RNA of RNA-DNA hybrids. The sequence is that of Ribonuclease HII from Sinorhizobium fredii (strain NBRC 101917 / NGR234).